We begin with the raw amino-acid sequence, 178 residues long: ATP synthase subunit delta (178 aa).

Belongs to the ATPase delta chain family. In terms of assembly, F-type ATPases have 2 components, F(1) - the catalytic core - and F(0) - the membrane proton channel. F(1) has five subunits: alpha(3), beta(3), gamma(1), delta(1), epsilon(1). F(0) has three main subunits: a(1), b(2) and c(10-14). The alpha and beta chains form an alternating ring which encloses part of the gamma chain. F(1) is attached to F(0) by a central stalk formed by the gamma and epsilon chains, while a peripheral stalk is formed by the delta and b chains.

The protein resides in the cell membrane. F(1)F(0) ATP synthase produces ATP from ADP in the presence of a proton or sodium gradient. F-type ATPases consist of two structural domains, F(1) containing the extramembraneous catalytic core and F(0) containing the membrane proton channel, linked together by a central stalk and a peripheral stalk. During catalysis, ATP synthesis in the catalytic domain of F(1) is coupled via a rotary mechanism of the central stalk subunits to proton translocation. Its function is as follows. This protein is part of the stalk that links CF(0) to CF(1). It either transmits conformational changes from CF(0) to CF(1) or is implicated in proton conduction. In Streptococcus pyogenes serotype M6 (strain ATCC BAA-946 / MGAS10394), this protein is ATP synthase subunit delta.